We begin with the raw amino-acid sequence, 448 residues long: Potassium/proton antiporter CemA (448 aa).

A run of 4 helical transmembrane segments spans residues 224–244, 325–345, 373–393, and 408–428; these read ALAS…ISML, IILH…LFII, ILLL…EIVI, and IISC…KYWI.

The protein belongs to the CemA family.

It is found in the plastid. The protein localises to the chloroplast inner membrane. It carries out the reaction K(+)(in) + H(+)(out) = K(+)(out) + H(+)(in). In terms of biological role, contributes to K(+)/H(+) antiport activity by supporting proton efflux to control proton extrusion and homeostasis in chloroplasts in a light-dependent manner to modulate photosynthesis. Prevents excessive induction of non-photochemical quenching (NPQ) under continuous-light conditions. Indirectly promotes efficient inorganic carbon uptake into chloroplasts. The sequence is that of Potassium/proton antiporter CemA from Angiopteris evecta (Mule's foot fern).